Here is a 290-residue protein sequence, read N- to C-terminus: 4-diphosphocytidyl-2-C-methyl-D-erythritol kinase (290 aa).

Lysine 14 is an active-site residue. Proline 103–serine 113 is a binding site for ATP. Aspartate 145 is a catalytic residue.

The protein belongs to the GHMP kinase family. IspE subfamily. Homodimer.

It carries out the reaction 4-CDP-2-C-methyl-D-erythritol + ATP = 4-CDP-2-C-methyl-D-erythritol 2-phosphate + ADP + H(+). It participates in isoprenoid biosynthesis; isopentenyl diphosphate biosynthesis via DXP pathway; isopentenyl diphosphate from 1-deoxy-D-xylulose 5-phosphate: step 3/6. Its function is as follows. Catalyzes the phosphorylation of the position 2 hydroxy group of 4-diphosphocytidyl-2C-methyl-D-erythritol. The polypeptide is 4-diphosphocytidyl-2-C-methyl-D-erythritol kinase (Pectobacterium atrosepticum (strain SCRI 1043 / ATCC BAA-672) (Erwinia carotovora subsp. atroseptica)).